We begin with the raw amino-acid sequence, 175 residues long: Putative metal-dependent hydrolase BPUM_0784 (175 aa).

H65, H157, and H161 together coordinate Zn(2+).

It belongs to the metal hydrolase YfiT family. In terms of assembly, homodimer. Zn(2+) is required as a cofactor.

Its subcellular location is the cytoplasm. Functionally, possible metal-dependent hydrolase. The chain is Putative metal-dependent hydrolase BPUM_0784 from Bacillus pumilus (strain SAFR-032).